We begin with the raw amino-acid sequence, 134 residues long: MNPLVYFSSSSENSHRFVEKLQLPAIRIPIAGAREKLRVEQPYILLVPSYGGGSPVGAVPIQVIRFLNDVHNRSLIRGVIAAGNTNFGDAYCLAGDIISHKCQVPYLYRFELLGTAEDVANVRKGVTEFWQRQN.

It belongs to the NrdI family.

Probably involved in ribonucleotide reductase function. This is Protein NrdI from Yersinia pseudotuberculosis serotype O:1b (strain IP 31758).